The primary structure comprises 299 residues: MLSRHINYFLAVAEHGSFTRAASALHVSQPALSQQIRQLEESLGVPLFDRSGRTIRLTDAGEVWRQYASRALQELGAGKRAIHDVADLTRGSLRIAVTPTFTSYFIGPLMADFYARYPSITLQLQEMSQEKIEDMLCRDELDVGIAFAPVHSPELEAIPLLTESLALVVAQHHPLAVHEQVALSRLHDEKLVLLSAEFATREQIDHYCEKAGLHPQVVIEANSISAVLELIRRTSLSTLLPAAIATQHDGLKAISLAPPLLERTAVLLRRKNSWQTAAAKAFLHMALDKCAVVGGNESR.

Positions 1-58 constitute an HTH lysR-type domain; that stretch reads MLSRHINYFLAVAEHGSFTRAASALHVSQPALSQQIRQLEESLGVPLFDRSGRTIRLT. The H-T-H motif DNA-binding region spans 18-37; that stretch reads FTRAASALHVSQPALSQQIR.

This sequence belongs to the LysR transcriptional regulatory family.

The protein resides in the cytoplasm. Its function is as follows. Positively regulates the cynTSX operon, and negatively regulates its own transcription. Binds specifically to the cynR-cynTSX intergenic region. The sequence is that of HTH-type transcriptional regulator CynR (cynR) from Escherichia coli (strain K12).